Here is a 554-residue protein sequence, read N- to C-terminus: Eukaryotic translation initiation factor 3 subunit D-2 (554 aa).

Residues 116-149 (RGNAAIGGGQGGAGGTGGAGVGNKYGKGRDMRRG) are disordered. The span at 120–140 (AIGGGQGGAGGTGGAGVGNKY) shows a compositional bias: gly residues. The interval 291 to 305 (QFDLLTVNETALEPP) is RNA gate. Positions 532-554 (FDSDGNDDEETSDDRPFLKSLGN) are disordered.

Belongs to the eIF-3 subunit D family. In terms of assembly, component of the eukaryotic translation initiation factor 3 (eIF-3) complex. The eIF-3 complex interacts with pix.

Its subcellular location is the cytoplasm. Its function is as follows. mRNA cap-binding component of the eukaryotic translation initiation factor 3 (eIF-3) complex, which is involved in protein synthesis of a specialized repertoire of mRNAs and, together with other initiation factors, stimulates binding of mRNA and methionyl-tRNAi to the 40S ribosome. The eIF-3 complex specifically targets and initiates translation of a subset of mRNAs involved in cell proliferation. In the eIF-3 complex, eif3d specifically recognizes and binds the 7-methylguanosine cap of a subset of mRNAs. In Drosophila virilis (Fruit fly), this protein is Eukaryotic translation initiation factor 3 subunit D-2.